A 277-amino-acid chain; its full sequence is Large ribosomal subunit protein uL2 (277 aa).

2 disordered regions span residues 36–55 and 213–277; these read PLPK…RHHG and WKGI…RKKK.

The protein belongs to the universal ribosomal protein uL2 family. As to quaternary structure, part of the 50S ribosomal subunit. Forms a bridge to the 30S subunit in the 70S ribosome.

Functionally, one of the primary rRNA binding proteins. Required for association of the 30S and 50S subunits to form the 70S ribosome, for tRNA binding and peptide bond formation. It has been suggested to have peptidyltransferase activity; this is somewhat controversial. Makes several contacts with the 16S rRNA in the 70S ribosome. The protein is Large ribosomal subunit protein uL2 of Staphylococcus aureus (strain bovine RF122 / ET3-1).